Reading from the N-terminus, the 650-residue chain is Chaperone protein DnaK (650 aa).

Phosphothreonine; by autocatalysis is present on T200. Residues 611-634 (AQQAGAAGAAGAAAEGASAQGGAQ) are compositionally biased toward low complexity. The disordered stretch occupies residues 611-650 (AQQAGAAGAAGAAAEGASAQGGAQPPDDVVDADFKEVKKD).

Belongs to the heat shock protein 70 family.

Its function is as follows. Acts as a chaperone. This is Chaperone protein DnaK from Burkholderia pseudomallei (strain 1710b).